Reading from the N-terminus, the 489-residue chain is Zeta-carotene desaturase (489 aa).

The protein belongs to the zeta carotene desaturase family. NAD(+) serves as cofactor. It depends on NADP(+) as a cofactor. Requires FAD as cofactor.

It carries out the reaction 9,9'-di-cis-zeta-carotene + 2 a quinone = 7,7',9,9'-tetra-cis-lycopene + 2 a quinol. The protein operates within carotenoid biosynthesis; lycopene biosynthesis. Its function is as follows. Catalyzes the conversion of zeta-carotene to lycopene via the intermediary of neurosporene. It carries out two consecutive desaturations (introduction of double bonds) at positions C-7 and C-7'. The protein is Zeta-carotene desaturase (crtQ) of Synechocystis sp. (strain ATCC 27184 / PCC 6803 / Kazusa).